A 381-amino-acid chain; its full sequence is tRNA-specific 2-thiouridylase MnmA (381 aa).

ATP is bound by residues Ala-14 to Ser-21 and Met-40. Cys-108 functions as the Nucleophile in the catalytic mechanism. The cysteines at positions 108 and 205 are disulfide-linked. ATP is bound at residue Gly-132. An interaction with tRNA region spans residues Lys-155–Gln-157. The active-site Cysteine persulfide intermediate is the Cys-205. The interval Arg-309–Tyr-310 is interaction with tRNA.

Belongs to the MnmA/TRMU family.

It localises to the cytoplasm. The enzyme catalyses S-sulfanyl-L-cysteinyl-[protein] + uridine(34) in tRNA + AH2 + ATP = 2-thiouridine(34) in tRNA + L-cysteinyl-[protein] + A + AMP + diphosphate + H(+). Functionally, catalyzes the 2-thiolation of uridine at the wobble position (U34) of tRNA, leading to the formation of s(2)U34. The protein is tRNA-specific 2-thiouridylase MnmA of Deinococcus geothermalis (strain DSM 11300 / CIP 105573 / AG-3a).